Reading from the N-terminus, the 324-residue chain is Olfactory receptor 5A2 (324 aa).

Over 1–26 (MAVGRNNTIVTKFILLGLSDHPQMKI) the chain is Extracellular. Asparagine 6 is a glycosylation site (N-linked (GlcNAc...) asparagine). The helical transmembrane segment at 27 to 47 (FLFMLFLGLYLLTLAWNLSLI) threads the bilayer. Residues 48 to 55 (ALIKMDSH) lie on the Cytoplasmic side of the membrane. Residues 56 to 76 (LHMPMYFFLSNLSFLDICYVS) form a helical membrane-spanning segment. Residues 77–100 (STAPKMLSDIITEQKTISFVGCAT) are Extracellular-facing. The cysteines at positions 98 and 190 are disulfide-linked. Residues 101–121 (QYFVFCGMGLTECFLLAAMAY) traverse the membrane as a helical segment. Residues 122–134 (DRYAAICNPLLYT) are Cytoplasmic-facing. Residues 135-155 (VLISHTLCLKMVVGAYVGGFL) form a helical membrane-spanning segment. Residues 156–197 (SSFIETYSVYQHDFCGPYMINHFFCDLPPVLALSCSDTFTSE) lie on the Extracellular side of the membrane. The chain crosses the membrane as a helical span at residues 198-218 (VVTFIVSVVVGIVSVLVVLIS). At 219–238 (YGYIVAAVVKISSATGRTKA) the chain is on the cytoplasmic side. The chain crosses the membrane as a helical span at residues 239–259 (FSTCASHLTAVTLFYGSGFFM). At 260–272 (YMRPSSSYSLNRD) the chain is on the extracellular side. A helical transmembrane segment spans residues 273-293 (KVVSIFYALVIPVVNPIIYSF). Residues 294-324 (RNKEIKNAMRKAMERDPGISHGGPFIFMTLG) lie on the Cytoplasmic side of the membrane.

This sequence belongs to the G-protein coupled receptor 1 family.

The protein localises to the cell membrane. Odorant receptor. In Homo sapiens (Human), this protein is Olfactory receptor 5A2 (OR5A2).